The following is a 956-amino-acid chain: uncharacterized protein (956 aa).

The stretch at 918–942 forms a coiled coil; the sequence is NSINEAIEKLNEAADAYQAIIDQQK.

This is an uncharacterized protein from Acanthamoeba polyphaga (Amoeba).